We begin with the raw amino-acid sequence, 367 residues long: Anhydro-N-acetylmuramic acid kinase (367 aa).

ATP is bound at residue 13–20; that stretch reads GTSMDGAD.

Belongs to the anhydro-N-acetylmuramic acid kinase family.

It catalyses the reaction 1,6-anhydro-N-acetyl-beta-muramate + ATP + H2O = N-acetyl-D-muramate 6-phosphate + ADP + H(+). The protein operates within amino-sugar metabolism; 1,6-anhydro-N-acetylmuramate degradation. It participates in cell wall biogenesis; peptidoglycan recycling. In terms of biological role, catalyzes the specific phosphorylation of 1,6-anhydro-N-acetylmuramic acid (anhMurNAc) with the simultaneous cleavage of the 1,6-anhydro ring, generating MurNAc-6-P. Is required for the utilization of anhMurNAc either imported from the medium or derived from its own cell wall murein, and thus plays a role in cell wall recycling. In Neisseria meningitidis serogroup A / serotype 4A (strain DSM 15465 / Z2491), this protein is Anhydro-N-acetylmuramic acid kinase.